The primary structure comprises 237 residues: Ribosomal RNA small subunit methyltransferase G (237 aa).

S-adenosyl-L-methionine contacts are provided by residues glycine 78, phenylalanine 83, 129 to 130 (AE), and arginine 148.

The protein belongs to the methyltransferase superfamily. RNA methyltransferase RsmG family.

The protein localises to the cytoplasm. In terms of biological role, specifically methylates the N7 position of a guanine in 16S rRNA. This is Ribosomal RNA small subunit methyltransferase G from Streptococcus thermophilus (strain ATCC BAA-491 / LMD-9).